The following is a 340-amino-acid chain: Ketol-acid reductoisomerase (NADP(+)) (340 aa).

The KARI N-terminal Rossmann domain occupies 3 to 183; sequence LPIYYDKDCD…GGGRTGIIHT (181 aa). NADP(+) is bound by residues 26 to 29, serine 54, and 84 to 87; these read FGSQ and DEIQ. Residue histidine 109 is part of the active site. Residue glycine 135 participates in NADP(+) binding. In terms of domain architecture, KARI C-terminal knotted spans 184-329; sequence TFKDETETDL…KRLRAMMPWI (146 aa). Mg(2+)-binding residues include aspartate 192, glutamate 196, glutamate 228, and glutamate 232. Serine 253 is a binding site for substrate.

The protein belongs to the ketol-acid reductoisomerase family. Mg(2+) serves as cofactor.

It catalyses the reaction (2R)-2,3-dihydroxy-3-methylbutanoate + NADP(+) = (2S)-2-acetolactate + NADPH + H(+). It carries out the reaction (2R,3R)-2,3-dihydroxy-3-methylpentanoate + NADP(+) = (S)-2-ethyl-2-hydroxy-3-oxobutanoate + NADPH + H(+). The protein operates within amino-acid biosynthesis; L-isoleucine biosynthesis; L-isoleucine from 2-oxobutanoate: step 2/4. It functions in the pathway amino-acid biosynthesis; L-valine biosynthesis; L-valine from pyruvate: step 2/4. Involved in the biosynthesis of branched-chain amino acids (BCAA). Catalyzes an alkyl-migration followed by a ketol-acid reduction of (S)-2-acetolactate (S2AL) to yield (R)-2,3-dihydroxy-isovalerate. In the isomerase reaction, S2AL is rearranged via a Mg-dependent methyl migration to produce 3-hydroxy-3-methyl-2-ketobutyrate (HMKB). In the reductase reaction, this 2-ketoacid undergoes a metal-dependent reduction by NADPH to yield (R)-2,3-dihydroxy-isovalerate. The protein is Ketol-acid reductoisomerase (NADP(+)) of Nitratiruptor sp. (strain SB155-2).